The chain runs to 142 residues: Galactose-binding lectin l-1 (142 aa).

Residues 3-134 (FVEVKNLIMK…DATVKNISVN (132 aa)) enclose the Galectin domain. 68–74 (WQEEQRD) provides a ligand contact to a beta-D-galactoside. N-linked (GlcNAc...) asparagine glycosylation is present at Asn-130.

As to quaternary structure, homodimer. The N-terminus is blocked. As to expression, skin; highest expression in that of individuals showing resistance to infectious disease.

It localises to the secreted. In terms of biological role, involved in host defense at the body surface. Causes agglutination of the Gram-positive bacterium S.difficile. Possesses calcium-independent hemagglutinating activity. The chain is Galactose-binding lectin l-1 from Anguilla japonica (Japanese eel).